Consider the following 508-residue polypeptide: ATP synthase subunit alpha, chloroplastic (508 aa).

Position 170-177 (170-177) interacts with ATP; it reads GDRQTGKT.

The protein belongs to the ATPase alpha/beta chains family. In terms of assembly, F-type ATPases have 2 components, F(1) - the catalytic core - and F(0) - the membrane proton channel. F(1) has five subunits: alpha(3), beta(3), gamma(1), delta(1), epsilon(1). F(0) has four main subunits: a(1), b(1), b'(1) and c(10-14). The alpha and beta chains form an alternating ring which encloses part of the gamma chain. F(1) is attached to F(0) by a central stalk formed by the gamma and epsilon chains, while a peripheral stalk is formed by the delta, b and b' chains.

The protein resides in the plastid. It localises to the chloroplast thylakoid membrane. It carries out the reaction ATP + H2O + 4 H(+)(in) = ADP + phosphate + 5 H(+)(out). F(1)F(0) ATP synthase produces ATP from ADP in the presence of a proton or sodium gradient. F-type ATPases consist of two structural domains, F(1) containing the extramembraneous catalytic core and F(0) containing the membrane proton channel, linked together by a central stalk and a peripheral stalk. During catalysis, ATP synthesis in the catalytic domain of F(1) is coupled via a rotary mechanism of the central stalk subunits to proton translocation. Functionally, the alpha chain is a regulatory subunit. The polypeptide is ATP synthase subunit alpha, chloroplastic (Chlamydomonas reinhardtii (Chlamydomonas smithii)).